We begin with the raw amino-acid sequence, 148 residues long: uncharacterized protein (148 aa).

This is an uncharacterized protein from Methanothermobacter thermautotrophicus (Methanobacterium thermoformicicum).